The primary structure comprises 439 residues: Type I secretion system membrane fusion protein PrsE (439 aa).

The chain crosses the membrane as a helical span at residues 20 to 40 (LIGVSVLALALVAGVGGWAAT).

It belongs to the membrane fusion protein (MFP) (TC 8.A.1) family. As to quaternary structure, part of a type I secretion system composed of PrsD and PrsE.

It localises to the cell inner membrane. In terms of biological role, mediates secretion of glycanase ExsH. This chain is Type I secretion system membrane fusion protein PrsE (prsE), found in Rhizobium meliloti (strain 1021) (Ensifer meliloti).